Consider the following 727-residue polypeptide: Malate synthase G (727 aa).

Acetyl-CoA contacts are provided by residues Val117, 124 to 125 (RY), Ser275, and Arg312. Arg339 acts as the Proton acceptor in catalysis. Residues Arg339, Glu431, and 456–459 (GFLD) contribute to the glyoxylate site. Mg(2+) contacts are provided by Glu431 and Asp459. Residue Pro540 coordinates acetyl-CoA. At Cys616 the chain carries Cysteine sulfenic acid (-SOH). The active-site Proton donor is the Asp630.

It belongs to the malate synthase family. GlcB subfamily. In terms of assembly, monomer. Mg(2+) serves as cofactor.

The protein resides in the cytoplasm. The enzyme catalyses glyoxylate + acetyl-CoA + H2O = (S)-malate + CoA + H(+). It participates in carbohydrate metabolism; glyoxylate cycle; (S)-malate from isocitrate: step 2/2. Its function is as follows. Involved in the glycolate utilization. Catalyzes the condensation and subsequent hydrolysis of acetyl-coenzyme A (acetyl-CoA) and glyoxylate to form malate and CoA. The protein is Malate synthase G of Halalkalibacterium halodurans (strain ATCC BAA-125 / DSM 18197 / FERM 7344 / JCM 9153 / C-125) (Bacillus halodurans).